The following is a 141-amino-acid chain: Small ribosomal subunit protein eS17z (141 aa).

The protein belongs to the eukaryotic ribosomal protein eS17 family.

The protein is Small ribosomal subunit protein eS17z (RPS17A) of Arabidopsis thaliana (Mouse-ear cress).